The sequence spans 158 residues: 2-C-methyl-D-erythritol 2,4-cyclodiphosphate synthase (158 aa).

Positions 9 and 11 each coordinate a divalent metal cation. 4-CDP-2-C-methyl-D-erythritol 2-phosphate contacts are provided by residues 9 to 11 (DVH) and 35 to 36 (HS). Position 43 (histidine 43) interacts with a divalent metal cation. Residues 57–59 (DIG), 62–66 (FPDTD), 101–107 (AQKPKMA), 133–136 (TTTE), phenylalanine 140, and arginine 143 each bind 4-CDP-2-C-methyl-D-erythritol 2-phosphate.

It belongs to the IspF family. As to quaternary structure, homotrimer. A divalent metal cation is required as a cofactor.

The catalysed reaction is 4-CDP-2-C-methyl-D-erythritol 2-phosphate = 2-C-methyl-D-erythritol 2,4-cyclic diphosphate + CMP. Its pathway is isoprenoid biosynthesis; isopentenyl diphosphate biosynthesis via DXP pathway; isopentenyl diphosphate from 1-deoxy-D-xylulose 5-phosphate: step 4/6. Involved in the biosynthesis of isopentenyl diphosphate (IPP) and dimethylallyl diphosphate (DMAPP), two major building blocks of isoprenoid compounds. Catalyzes the conversion of 4-diphosphocytidyl-2-C-methyl-D-erythritol 2-phosphate (CDP-ME2P) to 2-C-methyl-D-erythritol 2,4-cyclodiphosphate (ME-CPP) with a corresponding release of cytidine 5-monophosphate (CMP). This is 2-C-methyl-D-erythritol 2,4-cyclodiphosphate synthase from Bacillus velezensis (strain DSM 23117 / BGSC 10A6 / LMG 26770 / FZB42) (Bacillus amyloliquefaciens subsp. plantarum).